A 612-amino-acid polypeptide reads, in one-letter code: Transcription factor Sp2 (612 aa).

Ser78 is subject to Phosphoserine. 2 disordered regions span residues 166-195 (TTPSTSGHKPVPIKPAPVQKSSTTTTPVQS) and 226-250 (GPAQLLTESPPTPLSKTNKKARKKS). Over residues 184 to 195 (QKSSTTTTPVQS) the composition is skewed to polar residues. A 9aaTAD; inactive motif is present at residues 360 to 368 (GEVQTVLVQ). C2H2-type zinc fingers lie at residues 524 to 548 (HVCHIPDCGKTFRKTSLLRAHVRLH), 554 to 578 (FVCNWFFCGKRFTRSDELQRHARTH), and 584 to 606 (FECAQCQKRFMRSDHLTKHYKTH).

This sequence belongs to the Sp1 C2H2-type zinc-finger protein family.

It localises to the nucleus. In terms of biological role, binds to GC box promoters elements and selectively activates mRNA synthesis from genes that contain functional recognition sites. The chain is Transcription factor Sp2 (Sp2) from Mus musculus (Mouse).